A 201-amino-acid polypeptide reads, in one-letter code: MQPFTSHTGLAVMIDSANIDTDQIIPKQFLSKVTRDGFGVHLFHDWRYLDDAGDVPNPDFTLNKPRYRGASILLAQENFGCGSSREHAPWALADFGLRAIIAPSFADIFYGNSINNGLLPVKLSANEVRQLMDEVASEEGAQITVDLTTCKVISPSGAEFSFTLAESARHKLLNGLDAIGLTLSHGTQIGEYEANIPSWRR.

It belongs to the LeuD family. LeuD type 1 subfamily. As to quaternary structure, heterodimer of LeuC and LeuD.

It catalyses the reaction (2R,3S)-3-isopropylmalate = (2S)-2-isopropylmalate. The protein operates within amino-acid biosynthesis; L-leucine biosynthesis; L-leucine from 3-methyl-2-oxobutanoate: step 2/4. Its function is as follows. Catalyzes the isomerization between 2-isopropylmalate and 3-isopropylmalate, via the formation of 2-isopropylmaleate. The chain is 3-isopropylmalate dehydratase small subunit from Shewanella sp. (strain MR-7).